We begin with the raw amino-acid sequence, 368 residues long: L-lactate oxidase (368 aa).

One can recognise an FMN hydroxy acid dehydrogenase domain in the interval 13–368; the sequence is VNAIDVLDLA…KQMKVKTTFA (356 aa). Residue Tyr39 participates in pyruvate binding. FMN is bound by residues 92–94, Ser121, and Gln143; that span reads PIA. Tyr145 serves as a coordination point for pyruvate. Thr171 contacts FMN. Arg180 is a pyruvate binding site. The FMN site is built by Lys239 and Ser261. Residues His263 and Arg266 each contribute to the pyruvate site. Residue His263 is the Proton acceptor of the active site. Residues 294 to 298 and Arg318 contribute to the FMN site; that span reads DGGVQ.

It belongs to the FMN-dependent alpha-hydroxy acid dehydrogenase family. In terms of assembly, homotetramer. It depends on FMN as a cofactor.

It carries out the reaction (S)-lactate + O2 = pyruvate + H2O2. It catalyses the reaction 2-hydroxyoctanoate + O2 = 2-oxooctanoate + H2O2. Catalyzes the oxidation of (S)-lactate (L-lactate) to pyruvate, with a reduction of O2 to H2O2. To a lesser extent is also able to use 2-hydroxyoctanoate as substrate. May be involved in the utilization of L-lactate as an energy source for growth. The protein is L-lactate oxidase of Lacticaseibacillus rhamnosus (strain LMS2-1).